The following is a 451-amino-acid chain: NADH-quinone oxidoreductase subunit D (451 aa).

Belongs to the complex I 49 kDa subunit family. NDH-1 is composed of 14 different subunits. Subunits NuoB, C, D, E, F, and G constitute the peripheral sector of the complex.

It localises to the cell inner membrane. It carries out the reaction a quinone + NADH + 5 H(+)(in) = a quinol + NAD(+) + 4 H(+)(out). Functionally, NDH-1 shuttles electrons from NADH, via FMN and iron-sulfur (Fe-S) centers, to quinones in the respiratory chain. The immediate electron acceptor for the enzyme in this species is believed to be a menaquinone. Couples the redox reaction to proton translocation (for every two electrons transferred, four hydrogen ions are translocated across the cytoplasmic membrane), and thus conserves the redox energy in a proton gradient. In Salinibacter ruber (strain DSM 13855 / M31), this protein is NADH-quinone oxidoreductase subunit D.